The sequence spans 347 residues: S-adenosylmethionine:tRNA ribosyltransferase-isomerase (347 aa).

It belongs to the QueA family. In terms of assembly, monomer.

Its subcellular location is the cytoplasm. The catalysed reaction is 7-aminomethyl-7-carbaguanosine(34) in tRNA + S-adenosyl-L-methionine = epoxyqueuosine(34) in tRNA + adenine + L-methionine + 2 H(+). It participates in tRNA modification; tRNA-queuosine biosynthesis. In terms of biological role, transfers and isomerizes the ribose moiety from AdoMet to the 7-aminomethyl group of 7-deazaguanine (preQ1-tRNA) to give epoxyqueuosine (oQ-tRNA). The sequence is that of S-adenosylmethionine:tRNA ribosyltransferase-isomerase from Treponema denticola (strain ATCC 35405 / DSM 14222 / CIP 103919 / JCM 8153 / KCTC 15104).